The primary structure comprises 1482 residues: Chromosome partition protein MukB (1482 aa).

ATP is bound at residue 34–41 (GGNGAGKS). 6 coiled-coil regions span residues 337-418 (LNLV…QYQQ), 444-472 (LDTY…QTAH), 509-601 (RHLA…TSHA), 781-805 (AARE…ATLS), 835-1116 (EAEI…AKAG), and 1210-1265 (EAIE…LQSV). The flexible hinge stretch occupies residues 666–783 (PGGAEDARLN…SVPLFGRAAR (118 aa)). The tract at residues 1049–1077 (ADAGAEERARQRRDELHTRLSNNRSRRNQ) is disordered. A compositionally biased stretch (basic and acidic residues) spans 1051–1066 (AGAEERARQRRDELHT).

This sequence belongs to the SMC family. MukB subfamily. As to quaternary structure, homodimerization via its hinge domain. Binds to DNA via its C-terminal region. Interacts, and probably forms a ternary complex, with MukE and MukF via its C-terminal region. The complex formation is stimulated by calcium or magnesium. Interacts with tubulin-related protein FtsZ.

The protein resides in the cytoplasm. It is found in the nucleoid. In terms of biological role, plays a central role in chromosome condensation, segregation and cell cycle progression. Functions as a homodimer, which is essential for chromosome partition. Involved in negative DNA supercoiling in vivo, and by this means organize and compact chromosomes. May achieve or facilitate chromosome segregation by condensation DNA from both sides of a centrally located replisome during cell division. The protein is Chromosome partition protein MukB of Cronobacter sakazakii (strain ATCC BAA-894) (Enterobacter sakazakii).